The sequence spans 278 residues: Large ribosomal subunit protein uL2 (278 aa).

Residues 223 to 278 (RGSAMNPNDHPHGGGEGKAPVGRKAPMTPWGKKALGVKTRNKKKASTKLIVRRRTK) are disordered. Residues 261–278 (TRNKKKASTKLIVRRRTK) show a composition bias toward basic residues.

This sequence belongs to the universal ribosomal protein uL2 family. In terms of assembly, part of the 50S ribosomal subunit. Forms a bridge to the 30S subunit in the 70S ribosome.

Functionally, one of the primary rRNA binding proteins. Required for association of the 30S and 50S subunits to form the 70S ribosome, for tRNA binding and peptide bond formation. It has been suggested to have peptidyltransferase activity; this is somewhat controversial. Makes several contacts with the 16S rRNA in the 70S ribosome. The polypeptide is Large ribosomal subunit protein uL2 (Spiroplasma kunkelii).